The following is a 183-amino-acid chain: Phosphinothricin N-acetyltransferase (183 aa).

The N-acetyltransferase domain maps to 8–173 (ADIRRATEAD…WQLDFSLPVP (166 aa)). Residues 91–93 (VYV), 99–104 (RTGLGS), and N130 each bind acetyl-CoA.

This sequence belongs to the acetyltransferase family. PAT/BAR subfamily.

The enzyme catalyses phosphinothricin + acetyl-CoA = N-acetylphosphinothricin + CoA + H(+). In terms of biological role, inactivates phosphinothricin (PPT) by transfer of an acetyl group from acetyl CoA. Can also acetylate demethylphosphinothricin but not PTT or glutamate. This enzyme is an effector of phosphinothricin tripeptide (PTT or bialaphos) resistance. The polypeptide is Phosphinothricin N-acetyltransferase (Streptomyces hygroscopicus).